The primary structure comprises 516 residues: Bifunctional purine biosynthesis protein PurH (516 aa).

Residues M1–S146 enclose the MGS-like domain.

It belongs to the PurH family.

The catalysed reaction is (6R)-10-formyltetrahydrofolate + 5-amino-1-(5-phospho-beta-D-ribosyl)imidazole-4-carboxamide = 5-formamido-1-(5-phospho-D-ribosyl)imidazole-4-carboxamide + (6S)-5,6,7,8-tetrahydrofolate. The enzyme catalyses IMP + H2O = 5-formamido-1-(5-phospho-D-ribosyl)imidazole-4-carboxamide. It participates in purine metabolism; IMP biosynthesis via de novo pathway; 5-formamido-1-(5-phospho-D-ribosyl)imidazole-4-carboxamide from 5-amino-1-(5-phospho-D-ribosyl)imidazole-4-carboxamide (10-formyl THF route): step 1/1. Its pathway is purine metabolism; IMP biosynthesis via de novo pathway; IMP from 5-formamido-1-(5-phospho-D-ribosyl)imidazole-4-carboxamide: step 1/1. The chain is Bifunctional purine biosynthesis protein PurH from Rippkaea orientalis (strain PCC 8801 / RF-1) (Cyanothece sp. (strain PCC 8801)).